Here is a 79-residue protein sequence, read N- to C-terminus: Translational regulator CsrA (79 aa).

Belongs to the CsrA/RsmA family. As to quaternary structure, homodimer; the beta-strands of each monomer intercalate to form a hydrophobic core, while the alpha-helices form wings that extend away from the core.

It localises to the cytoplasm. In terms of biological role, a translational regulator that binds mRNA to regulate translation initiation and/or mRNA stability. Usually binds in the 5'-UTR at or near the Shine-Dalgarno sequence preventing ribosome-binding, thus repressing translation. Its main target seems to be the major flagellin gene, while its function is anatagonized by FliW. This chain is Translational regulator CsrA, found in Geotalea uraniireducens (strain Rf4) (Geobacter uraniireducens).